The sequence spans 130 residues: Small ribosomal subunit protein uS9 (130 aa).

The protein belongs to the universal ribosomal protein uS9 family.

This is Small ribosomal subunit protein uS9 from Halorhodospira halophila (strain DSM 244 / SL1) (Ectothiorhodospira halophila (strain DSM 244 / SL1)).